A 1472-amino-acid chain; its full sequence is MGGGHSALSGRSLDTFEKIRLRPNGKKKYQIKHLIWAGKEMERFGLHEKLLETKEGCQKIIEVLTPLEPTGSEGLKALFNLCCVIWCIHAEQKVKDTEEAVVTVKQHYHLVDKNEKAAKKKNETTAPPGGESRNYPVVNQNNAWVHQPLSPRTLNAWVKCVEEKRWGAEVVPMFQALSEGCLSYDVNQMLNVIGDHQGALQILKEVINEEAAEWDRTHRPPAGPLPAGQLRDPTGSDIAGTTSSIQEQIEWTFNANPRIDVGAQYRKWVILGLQKVVQMYNPQKVLDIRQGPKEPFQDYVDRFYKALRAEQAPQDVKNWMTQTLLIQNANPDCKLILKGLGMNPTLEEMLIACQGVGGPQHKAKLMVEMMSNGQNMVQVGPQKKGPRGPLKCFNCGKFGHMQRECKAPRQIKCFKCGKIGHMAKDCKNGQANFFRVWPLGRSETKKFCAIQRRHSWSGTNSPPNGNSLRSSKEAPPAVCREGTAPERGERTDKETEGERSGGCFLELPLWRRPMKRVIIEGTPVQALLDTGADDTIIQEKDLHFPPHKPWRSKVVGGIGGGIHVKEYQGVQVQLEDKIITGSILIGSTPINIIGRNILAQAGMKLVMGVLSSQIEETKVQLKEGKDGPKLKQWPLSREKIEALTEICKQMEEEGKLSRIGGENPYNTPVFAIKKKDKTQWRMLVDFRELNKATQDFFEVQLGIPHPAGLQKKKQITVIDIGDAYYSIPLCKEFRKYTAFTIPSVNNTGPGIRYQFNCLPQGWKGSPTIFQNTAANILEEIKRHTPGLEIVQYMDDLWLASDHDETRHNQQVDIVRKMLLEKGLETPDKKVQREPPWEWMGYKLHPNKWTINKIELPPLEGEWTVNKIQKVVGVLNWASQIYPGIKTKHTCAMLRGKKNLLEEIVWTEEAEAEYKNNQGIVQETQEGTYYDPLKELIATVQKQGEGQWTYQFTQEGAVLKVGRYAKQRETHTNDLRTLAHLVQKICKEALTIWGRLPRVQLPVDKKTWDMWWQDYWQVSWIPEWEFVSTPLLVKLWYSLVKEPIKGEDVYYVDGAASKVTKLGKAGYLSERGKSRIRELENTTNQQAELTAVKMALEDSGENVNIVTDSQYVMNILTACPQESNSPLVEQIIQALMKKRQVYLQWVPAHKGIGGNTEIDKLVSKGIRQILFLDRIEEAQDDHAKYHNNWRSMVQEFGLPNIVAKEIVAACPKCQIRGEPKHGQVDASIETWQMDCTHLEGKVIIVAVHVASGFIEAEVIPRETGKETAHFLLKLLARWPVKHLHTDNGPNFTSQNVAAVCWWGNIEHTTGIPYNPQSQGSVESMNRQLKEIISQIRDDCERLETAVQMATHIHNFKRKGGIGGISSAERLVNMLTTQLELNTLQNQIQKILNFKVYYREGRDPVWKGPARLIWKGEGAVVIKEGEDIKVVPRRKAKIIKDYGERKTMDSEGSMEGVREANKQMEGDSDLQDQE.

Gly2 carries the N-myristoyl glycine; by host lipid modification. The Nuclear export signal motif lies at 16–22 (FEKIRLR). The Nuclear localization signal motif lies at 26-32 (KKKYQIK). Disordered regions lie at residues 115–135 (EKAAKKKNETTAPPGGESRNY) and 215–234 (DRTHRPPAGPLPAGQLRDPT). Residue Tyr135 is modified to Phosphotyrosine; by host. 2 consecutive CCHC-type zinc fingers follow at residues 390-407 (LKCFNCGKFGHMQRECKA) and 411-428 (IKCFKCGKIGHMAKDCKN). Positions 454–500 (HSWSGTNSPPNGNSLRSSKEAPPAVCREGTAPERGERTDKETEGERS) are disordered. Residues 456-469 (WSGTNSPPNGNSLR) show a composition bias toward polar residues. The segment covering 483–499 (TAPERGERTDKETEGER) has biased composition (basic and acidic residues). The region spanning 524-597 (VQALLDTGAD…TPINIIGRNI (74 aa)) is the Peptidase A2 domain. Asp529 functions as the For protease activity; shared with dimeric partner in the catalytic mechanism. Residues 653-843 (EGKLSRIGGE…PPWEWMGYKL (191 aa)) enclose the Reverse transcriptase domain. Mg(2+) is bound by residues Asp719, Asp794, and Asp795. The segment at 836-844 (WEWMGYKLH) is RT 'primer grip'. A Tryptophan repeat motif motif is present at residues 1007–1023 (WDMWWQDYWQVSWIPEW). The 124-residue stretch at 1043–1166 (IKGEDVYYVD…IDKLVSKGIR (124 aa)) folds into the RNase H type-1 domain. 4 residues coordinate Mg(2+): Asp1052, Glu1087, Asp1107, and Asp1158. The segment at 1172–1213 (DRIEEAQDDHAKYHNNWRSMVQEFGLPNIVAKEIVAACPKCQ) adopts an Integrase-type zinc-finger fold. Zn(2+) contacts are provided by His1181, His1185, Cys1209, and Cys1212. The Integrase catalytic domain occupies 1223 to 1373 (VDASIETWQM…SSAERLVNML (151 aa)). Residues Asp1233 and Asp1285 each coordinate Mg(2+). The integrase-type DNA-binding region spans 1392-1439 (FKVYYREGRDPVWKGPARLIWKGEGAVVIKEGEDIKVVPRRKAKIIKD). The interval 1440-1472 (YGERKTMDSEGSMEGVREANKQMEGDSDLQDQE) is disordered. Positions 1454–1463 (GVREANKQME) are enriched in basic and acidic residues.

Homotrimer. Interacts with gp41 (via C-terminus). In terms of assembly, homodimer. The active site consists of two apposed aspartic acid residues. As to quaternary structure, heterodimer of p66 RT and p51 RT (RT p66/p51). Heterodimerization of RT is essential for DNA polymerase activity. Despite the sequence identities, p66 RT and p51 RT have distinct folding. Homotetramer; may further associate as a homohexadecamer. Requires Mg(2+) as cofactor. In terms of processing, specific enzymatic cleavages by the viral protease yield mature proteins. The protease is released by autocatalytic cleavage. The polyprotein is cleaved during and after budding, this process is termed maturation. Proteolytic cleavage of p66 RT removes the RNase H domain to yield the p51 RT subunit. Post-translationally, capsid protein p24 is phosphorylated.

Its subcellular location is the virion. It localises to the host nucleus. The protein resides in the host cytoplasm. It is found in the host cell membrane. The enzyme catalyses Specific for a P1 residue that is hydrophobic, and P1' variable, but often Pro.. It catalyses the reaction Endohydrolysis of RNA in RNA/DNA hybrids. Three different cleavage modes: 1. sequence-specific internal cleavage of RNA. Human immunodeficiency virus type 1 and Moloney murine leukemia virus enzymes prefer to cleave the RNA strand one nucleotide away from the RNA-DNA junction. 2. RNA 5'-end directed cleavage 13-19 nucleotides from the RNA end. 3. DNA 3'-end directed cleavage 15-20 nucleotides away from the primer terminus.. It carries out the reaction 3'-end directed exonucleolytic cleavage of viral RNA-DNA hybrid.. The catalysed reaction is DNA(n) + a 2'-deoxyribonucleoside 5'-triphosphate = DNA(n+1) + diphosphate. With respect to regulation, the viral protease is inhibited by many synthetic protease inhibitors (PIs), such as amprenavir, atazanavir, indinavir, loprinavir, nelfinavir, ritonavir and saquinavir. RT can be inhibited either by nucleoside RT inhibitors (NRTIs) or by non nucleoside RT inhibitors (NNRTIs). NRTIs act as chain terminators, whereas NNRTIs inhibit DNA polymerization by binding a small hydrophobic pocket near the RT active site and inducing an allosteric change in this region. Classical NRTIs are abacavir, adefovir (PMEA), didanosine (ddI), lamivudine (3TC), stavudine (d4T), tenofovir (PMPA), zalcitabine (ddC), and zidovudine (AZT). Classical NNRTIs are atevirdine (BHAP U-87201E), delavirdine, efavirenz (DMP-266), emivirine (I-EBU), and nevirapine (BI-RG-587). The tritherapies used as a basic effective treatment of AIDS associate two NRTIs and one NNRTI. Use of protease inhibitors in tritherapy regimens permit more ambitious therapeutic strategies. Functionally, gag-Pol polyprotein and Gag polyprotein may regulate their own translation, by the binding genomic RNA in the 5'-UTR. At low concentration, Gag-Pol and Gag would promote translation, whereas at high concentration, the polyproteins encapsidate genomic RNA and then shut off translation. Matrix protein p17 has two main functions: in infected cell, it targets Gag and Gag-pol polyproteins to the plasma membrane via a multipartite membrane-binding signal, that includes its myristointegration complex. The myristoylation signal and the NLS exert conflicting influences its subcellular localization. The key regulation of these motifs might be phosphorylation of a portion of MA molecules on the C-terminal tyrosine at the time of virus maturation, by virion-associated cellular tyrosine kinase. Implicated in the release from host cell mediated by Vpu. In terms of biological role, capsid protein p24 forms the conical core that encapsulates the genomic RNA-nucleocapsid complex in the virion. The core is constituted by capsid protein hexamer subunits. The core is disassembled soon after virion entry. Interaction with host PPIA/CYPA protects the virus from restriction by host TRIM5-alpha and from an unknown antiviral activity in host cells. This capsid restriction by TRIM5 is one of the factors which restricts SIV to the simian species. Its function is as follows. Nucleocapsid protein p7 encapsulates and protects viral dimeric unspliced (genomic) RNA. Binds these RNAs through its zinc fingers. Facilitates rearangement of nucleic acid secondary structure during retrotranscription of genomic RNA. This capability is referred to as nucleic acid chaperone activity. Functionally, the aspartyl protease mediates proteolytic cleavages of Gag and Gag-Pol polyproteins during or shortly after the release of the virion from the plasma membrane. Cleavages take place as an ordered, step-wise cascade to yield mature proteins. This process is called maturation. Displays maximal activity during the budding process just prior to particle release from the cell. Also cleaves Nef and Vif, probably concomitantly with viral structural proteins on maturation of virus particles. Hydrolyzes host EIF4GI and PABP1 in order to shut off the capped cellular mRNA translation. The resulting inhibition of cellular protein synthesis serves to ensure maximal viral gene expression and to evade host immune response. Reverse transcriptase/ribonuclease H (RT) is a multifunctional enzyme that converts the viral dimeric RNA genome into dsDNA in the cytoplasm, shortly after virus entry into the cell. This enzyme displays a DNA polymerase activity that can copy either DNA or RNA templates, and a ribonuclease H (RNase H) activity that cleaves the RNA strand of RNA-DNA heteroduplexes in a partially processive 3' to 5' endonucleasic mode. Conversion of viral genomic RNA into dsDNA requires many steps. A tRNA binds to the primer-binding site (PBS) situated at the 5'-end of the viral RNA. RT uses the 3' end of the tRNA primer to perform a short round of RNA-dependent minus-strand DNA synthesis. The reading proceeds through the U5 region and ends after the repeated (R) region which is present at both ends of viral RNA. The portion of the RNA-DNA heteroduplex is digested by the RNase H, resulting in a ssDNA product attached to the tRNA primer. This ssDNA/tRNA hybridizes with the identical R region situated at the 3' end of viral RNA. This template exchange, known as minus-strand DNA strong stop transfer, can be either intra- or intermolecular. RT uses the 3' end of this newly synthesized short ssDNA to perform the RNA-dependent minus-strand DNA synthesis of the whole template. RNase H digests the RNA template except for two polypurine tracts (PPTs) situated at the 5'-end and near the center of the genome. It is not clear if both polymerase and RNase H activities are simultaneous. RNase H can probably proceed both in a polymerase-dependent (RNA cut into small fragments by the same RT performing DNA synthesis) and a polymerase-independent mode (cleavage of remaining RNA fragments by free RTs). Secondly, RT performs DNA-directed plus-strand DNA synthesis using the PPTs that have not been removed by RNase H as primers. PPTs and tRNA primers are then removed by RNase H. The 3' and 5' ssDNA PBS regions hybridize to form a circular dsDNA intermediate. Strand displacement synthesis by RT to the PBS and PPT ends produces a blunt ended, linear dsDNA copy of the viral genome that includes long terminal repeats (LTRs) at both ends. In terms of biological role, integrase catalyzes viral DNA integration into the host chromosome, by performing a series of DNA cutting and joining reactions. This enzyme activity takes place after virion entry into a cell and reverse transcription of the RNA genome in dsDNA. The first step in the integration process is 3' processing. This step requires a complex comprising the viral genome, matrix protein, Vpr and integrase. This complex is called the pre-integration complex (PIC). The integrase protein removes 2 nucleotides from each 3' end of the viral DNA, leaving recessed CA OH's at the 3' ends. In the second step, the PIC enters cell nucleus. This process is mediated through integrase and Vpr proteins, and allows the virus to infect a non dividing cell. This ability to enter the nucleus is specific of lentiviruses, other retroviruses cannot and rely on cell division to access cell chromosomes. In the third step, termed strand transfer, the integrase protein joins the previously processed 3' ends to the 5' ends of strands of target cellular DNA at the site of integration. The 5'-ends are produced by integrase-catalyzed staggered cuts, 5 bp apart. A Y-shaped, gapped, recombination intermediate results, with the 5'-ends of the viral DNA strands and the 3' ends of target DNA strands remaining unjoined, flanking a gap of 5 bp. The last step is viral DNA integration into host chromosome. This involves host DNA repair synthesis in which the 5 bp gaps between the unjoined strands are filled in and then ligated. Since this process occurs at both cuts flanking the SIV genome, a 5 bp duplication of host DNA is produced at the ends of SIV integration. Alternatively, Integrase may catalyze the excision of viral DNA just after strand transfer, this is termed disintegration. The chain is Gag-Pol polyprotein (gag-pol) from Simian immunodeficiency virus agm.grivet (isolate AGM gr-1) (SIV-agm.gri).